Reading from the N-terminus, the 31-residue chain is GTLPCGESCVWIPCISSVVGCSCKSKVCYKD.

Residues 1 to 31 constitute a cross-link (cyclopeptide (Gly-Asp)); sequence GTLPCGESCVWIPCISSVVGCSCKSKVCYKD. 3 disulfide bridges follow: Cys-5/Cys-21, Cys-9/Cys-23, and Cys-14/Cys-28.

Post-translationally, this is a cyclic peptide. In terms of tissue distribution, expressed in petioles and runners but not in leaves, petals and roots (at protein level).

Probably participates in a plant defense mechanism. This chain is Cycloviolacin-O19, found in Viola odorata (Sweet violet).